The sequence spans 489 residues: Protein DETOXIFICATION 26 (489 aa).

A run of 12 helical transmembrane segments spans residues 42–62 (IWYI…ILII), 75–95 (LAAI…LLLG), 125–145 (IILF…TPIL), 157–177 (LTGT…FFFP), 190–210 (VIAI…WFFV), 217–237 (IIGT…ILFL), 271–291 (IMLC…GNLV), 300–320 (LSIC…FFAG), 342–362 (IVSI…IVIF), 385–405 (VLLA…GVAV), 416–436 (INLG…GWIF), and 442–462 (GIWA…LIII).

This sequence belongs to the multi antimicrobial extrusion (MATE) (TC 2.A.66.1) family.

The protein resides in the membrane. The protein is Protein DETOXIFICATION 26 of Arabidopsis thaliana (Mouse-ear cress).